Reading from the N-terminus, the 239-residue chain is Ribosomal RNA small subunit methyltransferase G (239 aa).

S-adenosyl-L-methionine-binding positions include glycine 77, phenylalanine 82, 128–129 (AE), and arginine 147.

It belongs to the methyltransferase superfamily. RNA methyltransferase RsmG family.

It localises to the cytoplasm. Functionally, specifically methylates the N7 position of guanine in position 535 of 16S rRNA. The chain is Ribosomal RNA small subunit methyltransferase G from Bacillus cereus (strain AH187).